The chain runs to 288 residues: Ribosomal RNA small subunit methyltransferase A (288 aa).

N18, L20, G45, E66, D91, and N118 together coordinate S-adenosyl-L-methionine.

Belongs to the class I-like SAM-binding methyltransferase superfamily. rRNA adenine N(6)-methyltransferase family. RsmA subfamily.

Its subcellular location is the cytoplasm. The catalysed reaction is adenosine(1518)/adenosine(1519) in 16S rRNA + 4 S-adenosyl-L-methionine = N(6)-dimethyladenosine(1518)/N(6)-dimethyladenosine(1519) in 16S rRNA + 4 S-adenosyl-L-homocysteine + 4 H(+). In terms of biological role, specifically dimethylates two adjacent adenosines (A1518 and A1519) in the loop of a conserved hairpin near the 3'-end of 16S rRNA in the 30S particle. May play a critical role in biogenesis of 30S subunits. This is Ribosomal RNA small subunit methyltransferase A from Pasteurella multocida (strain Pm70).